We begin with the raw amino-acid sequence, 547 residues long: Riboflavin transporter RibJ (547 aa).

Residues Met-1 to Asp-11 are Cytoplasmic-facing. A helical membrane pass occupies residues His-12 to Ile-32. Over Asp-33–Ser-58 the chain is Extracellular. Residues Leu-59–Val-79 traverse the membrane as a helical segment. Over Asp-80–Arg-85 the chain is Cytoplasmic. A helical membrane pass occupies residues Phe-86 to Ala-106. Topologically, residues Ala-107 to Asn-108 are extracellular. A helical transmembrane segment spans residues Ile-109–Ser-129. Residues Pro-130–Gly-144 are Cytoplasmic-facing. The chain crosses the membrane as a helical span at residues Leu-145 to Ala-165. Topologically, residues Gly-166 to Arg-175 are extracellular. Residues Lys-176 to Ala-196 form a helical membrane-spanning segment. Residues Arg-197–Phe-344 lie on the Cytoplasmic side of the membrane. The tract at residues Arg-198–Gln-293 is disordered. The span at Asn-244–Arg-255 shows a compositional bias: basic and acidic residues. Residues Leu-345 to Ile-365 form a helical membrane-spanning segment. Residues Ser-366 to Ala-386 are Extracellular-facing. Residues Ala-387–Leu-407 form a helical membrane-spanning segment. Residues Ala-408–Thr-412 lie on the Cytoplasmic side of the membrane. Residues Ala-413–Leu-433 traverse the membrane as a helical segment. The Extracellular segment spans residues Gly-434 to Tyr-437. A helical membrane pass occupies residues Val-438–Met-458. The Cytoplasmic segment spans residues Pro-459 to Asn-470. A helical transmembrane segment spans residues Leu-471–Pro-491. The Extracellular portion of the chain corresponds to Met-492 to Ala-505. N-linked (GlcNAc...) asparagine glycosylation occurs at Asn-501. A helical membrane pass occupies residues Phe-506–Leu-526. Residues Trp-527–Met-547 lie on the Cytoplasmic side of the membrane.

This sequence belongs to the major facilitator superfamily. RibJ family.

It is found in the cell membrane. Its function is as follows. Transporter involved in riboflavin (vitamin B2) uptake. Also transports FMN and FAD. This is Riboflavin transporter RibJ from Trypanosoma brucei brucei (strain 927/4 GUTat10.1).